A 228-amino-acid chain; its full sequence is Endonuclease V (228 aa).

Asp36 and Asp104 together coordinate Mg(2+).

This sequence belongs to the endonuclease V family. The cofactor is Mg(2+).

It is found in the cytoplasm. It catalyses the reaction Endonucleolytic cleavage at apurinic or apyrimidinic sites to products with a 5'-phosphate.. In terms of biological role, DNA repair enzyme involved in the repair of deaminated bases. Selectively cleaves double-stranded DNA at the second phosphodiester bond 3' to a deoxyinosine leaving behind the intact lesion on the nicked DNA. The protein is Endonuclease V of Serratia proteamaculans (strain 568).